The primary structure comprises 102 residues: Large ribosomal subunit protein bL21 (102 aa).

This sequence belongs to the bacterial ribosomal protein bL21 family. In terms of assembly, part of the 50S ribosomal subunit. Contacts protein L20.

Functionally, this protein binds to 23S rRNA in the presence of protein L20. This chain is Large ribosomal subunit protein bL21, found in Bacillus velezensis (strain DSM 23117 / BGSC 10A6 / LMG 26770 / FZB42) (Bacillus amyloliquefaciens subsp. plantarum).